The chain runs to 245 residues: 1-(5-phosphoribosyl)-5-[(5-phosphoribosylamino)methylideneamino] imidazole-4-carboxamide isomerase (245 aa).

Residue aspartate 8 is the Proton acceptor of the active site. Aspartate 131 serves as the catalytic Proton donor.

Belongs to the HisA/HisF family.

The protein localises to the cytoplasm. The enzyme catalyses 1-(5-phospho-beta-D-ribosyl)-5-[(5-phospho-beta-D-ribosylamino)methylideneamino]imidazole-4-carboxamide = 5-[(5-phospho-1-deoxy-D-ribulos-1-ylimino)methylamino]-1-(5-phospho-beta-D-ribosyl)imidazole-4-carboxamide. Its pathway is amino-acid biosynthesis; L-histidine biosynthesis; L-histidine from 5-phospho-alpha-D-ribose 1-diphosphate: step 4/9. In Neisseria meningitidis serogroup C (strain 053442), this protein is 1-(5-phosphoribosyl)-5-[(5-phosphoribosylamino)methylideneamino] imidazole-4-carboxamide isomerase.